Here is a 470-residue protein sequence, read N- to C-terminus: MPGFDYKFLEKPKRRLLCPLCGKPMREPVQVSTCGHRFCDTCLQEFLSEGVFKCPEDQLPLDYAKIYPDPELEVQVLGLAIRCIHSEEGCRWSGPLRHLQGHLNTCSFNVVPCPNRCPAKLSRRDLPAHLQHDCPKRRLKCEFCGCDFSGEAYESHEGVCPQESVYCENKCGARMMRRLLAQHATSECPKRTQPCAYCTKEFVYDTIQSHQYQCPRLPVPCPNQCGVGTVAREDLPTHLKDSCSTAFVLCPFKESGCKHRCPKLAMGRHVEESVKPHLAMMCALVSRQRQELQELRRELEELSIGSDGVLIWKIGSYGRRLQEAKAKPNLECFSPAFYTHKYGYKLQVSAFLNGNGSGEGTHLSIYIRVLPGAFDNLLEWPFARRVTFSLLDQSDPGLAKPQHVTETFHPDPNWKNFQKPGTWRGSLDESSLGFGYPKFISHQDIRKRNYVRDDAVFIRASVELPRKILS.

Residues 18–58 form an RING-type zinc finger; the sequence is CPLCGKPMREPVQVSTCGHRFCDTCLQEFLSEGVFKCPEDQ. 3 consecutive TRAF-type zinc fingers follow at residues 101-154, 155-208, and 209-267; these read GHLN…EAYE, SHEG…DTIQ, and SHQY…LAMG. Lysine 263 is covalently cross-linked (Glycyl lysine isopeptide (Lys-Gly) (interchain with G-Cter in ubiquitin)). Residues 277-310 are a coiled coil; the sequence is HLAMMCALVSRQRQELQELRRELEELSIGSDGVL. The region spanning 307 to 462 is the MATH domain; it reads DGVLIWKIGS…DDAVFIRASV (156 aa). A Phosphoserine modification is found at serine 426.

Belongs to the TNF receptor-associated factor family. B subfamily. In terms of assembly, homotrimer. Interacts with LTBR/TNFRSF3, NGFR/TNFRSF16, RPS6KB1 and TGFB1I1. Interacts with SMURF1. Interacts (via TRAF domain) with MAP3K4 (via kinase domain). Interacts with NCF1, TICAM1, IRAK1 and TRAF6, and is probably part of a complex containing TRAF4, NCF1, TICAM1, IRAK1 and TRAF6. Interacts (via MATH domain) with GP6 and GP1BB. Interacts with EGFR (via C-terminal region); this interaction promotes the formation of EGFR asymmetric dimers. Interacts with PKM; this interaction promotes PKM kinase activity. In terms of processing, polyubiquitinated, leading to its proteasomal degradation. Ubiquitinated at Lys-263 by the SCF(FBXL2) complex, leading to its degradation by the proteasome. As to expression, predominantly expressed in brain. Preferentially expressed by postmitotic undifferentiated neurons in developing central (CNS) and peripheral (PNS) nervous system, and in nervous tissues of sensory organs. In the embryo, protein expression was shown in brain, thymus, salivary glands and intestine. In the adult, protein expression is restricted to the brain (hippocampus and olfactory bulb).

The protein resides in the cytoplasm. Its subcellular location is the nucleus. The protein localises to the perinuclear region. It is found in the cell junction. It localises to the tight junction. The protein resides in the cell membrane. Its subcellular location is the cytoskeleton. The catalysed reaction is S-ubiquitinyl-[E2 ubiquitin-conjugating enzyme]-L-cysteine + [acceptor protein]-L-lysine = [E2 ubiquitin-conjugating enzyme]-L-cysteine + N(6)-ubiquitinyl-[acceptor protein]-L-lysine.. Its pathway is protein degradation; proteasomal ubiquitin-dependent pathway. Functionally, adapter protein with E3 ligase activity that is involved in many diverse biological processes including cell proliferation, migration, differentiation, DNA repair, platelet activation or apoptosis. Promotes EGFR-mediated signaling by facilitating the dimerization of EGFR and downstream AKT activation thereby promoting cell proliferation. Ubiquitinates SMURF2 through 'Lys-48'-linked ubiquitin chain leading to SMURF2 degradation through the proteasome and subsequently osteogenic differentiation. Promotes 'Lys-63'-mediated ubiquitination of CHK1 which in turn activates cell cycle arrest and activation of DNA repair. In addition, promotes an atypical 'Lys-29'-linked ubiquitination at the C-terminal end of IRS1 which is crucial for insulin-like growth factor (IGF) signal transduction. Regulates activation of NF-kappa-B in response to signaling through Toll-like receptors. Required for normal skeleton development, and for normal development of the respiratory tract. Required for activation of RPS6KB1 in response to TNF signaling. Modulates TRAF6 functions. Inhibits adipogenic differentiation by activating pyruvate kinase PKM activity and subsequently the beta-catenin signaling pathway. This Mus musculus (Mouse) protein is TNF receptor-associated factor 4 (Traf4).